We begin with the raw amino-acid sequence, 103 residues long: Small ribosomal subunit protein uS10 (103 aa).

The protein belongs to the universal ribosomal protein uS10 family. Part of the 30S ribosomal subunit.

Its function is as follows. Involved in the binding of tRNA to the ribosomes. The polypeptide is Small ribosomal subunit protein uS10 (Hahella chejuensis (strain KCTC 2396)).